The primary structure comprises 705 residues: CAP-Gly domain-containing linker protein 4 (705 aa).

3 ANK repeats span residues 65 to 101 (TSVS…NVND), 149 to 180 (TNMN…DVDA), and 186 to 215 (NFGT…NPAF). A CAP-Gly 1 domain is found at 303–345 (GTTEFASGQWAGIELDEPEGKNNGSVGKVQYFKCAPKYGIFAP). Disordered regions lie at residues 391 to 410 (MTSK…PGEE) and 431 to 479 (TSSL…ANNS). Residues 441–452 (PKKQNAISSNKK) are compositionally biased toward polar residues. Over residues 455-479 (SKSPSLSSRASAGLNSSATSTANNS) the composition is skewed to low complexity. The region spanning 505-547 (GTTNFAPGYWYGIELEKPHGKNDGSVGGVQYFSCSPRYGIFAP) is the CAP-Gly 2 domain. Phosphoserine is present on residues S557 and S609. In terms of domain architecture, CAP-Gly 3 spans 644–686 (GPTDFASGIWLGLELRSAKGKNDGSVGDKRYFTCKPNHGVLVR).

This is CAP-Gly domain-containing linker protein 4 (CLIP4) from Homo sapiens (Human).